A 122-amino-acid polypeptide reads, in one-letter code: Large ribosomal subunit protein uL14 (122 aa).

It belongs to the universal ribosomal protein uL14 family. Part of the 50S ribosomal subunit. Forms a cluster with proteins L3 and L19. In the 70S ribosome, L14 and L19 interact and together make contacts with the 16S rRNA in bridges B5 and B8.

Functionally, binds to 23S rRNA. Forms part of two intersubunit bridges in the 70S ribosome. The sequence is that of Large ribosomal subunit protein uL14 from Buchnera aphidicola subsp. Schizaphis graminum (strain Sg).